A 266-amino-acid chain; its full sequence is Glucagon-1 (266 aa).

An N-terminal signal peptide occupies residues 1–20; the sequence is MKSTCYMIGILLMILQNTYQ. 6 propeptides span residues 21–50, 84–95, 136–140, 175–178, 213–224, and 261–266; these read SPVP…LKEV, SGELSRRNADYE, NAEFE, IRYS, NFSEVHSVEEMD, and DLLEEQ. Polar residues predominate over residues 23-32; the sequence is VPETDANSRS. Residues 23-44 form a disordered region; sequence VPETDANSRSVKAARNEAVDDS.

It belongs to the glucagon family.

The protein localises to the secreted. Promotes hydrolysis of glycogen and lipids, and raises the blood sugar level. This Xenopus laevis (African clawed frog) protein is Glucagon-1 (gcg1).